The primary structure comprises 439 residues: GTPase Der (439 aa).

2 consecutive EngA-type G domains span residues 4–169 (AMVS…PQEE) and 177–352 (IKIA…EEYN). Residues 10–17 (GRPNVGKS), 57–61 (DTGGL), 120–123 (NKVD), 183–190 (GKPNVGKS), 230–234 (DTAGI), and 295–298 (NKWD) contribute to the GTP site. The KH-like domain maps to 353–437 (KRITTGLLNN…PIVISTKKRG (85 aa)).

The protein belongs to the TRAFAC class TrmE-Era-EngA-EngB-Septin-like GTPase superfamily. EngA (Der) GTPase family. Associates with the 50S ribosomal subunit.

In terms of biological role, GTPase that plays an essential role in the late steps of ribosome biogenesis. The sequence is that of GTPase Der from Thermoanaerobacter sp. (strain X514).